Consider the following 271-residue polypeptide: tRNA pseudouridine synthase A (271 aa).

The active-site Nucleophile is Asp-51. Tyr-109 contacts substrate.

It belongs to the tRNA pseudouridine synthase TruA family. As to quaternary structure, homodimer.

The catalysed reaction is uridine(38/39/40) in tRNA = pseudouridine(38/39/40) in tRNA. In terms of biological role, formation of pseudouridine at positions 38, 39 and 40 in the anticodon stem and loop of transfer RNAs. In Methylococcus capsulatus (strain ATCC 33009 / NCIMB 11132 / Bath), this protein is tRNA pseudouridine synthase A.